A 399-amino-acid polypeptide reads, in one-letter code: MGTYALPDAFGHYGPYGGRFVAETLIPALEELERAYQEAQRDPEFRAELHSELRQFVGRPNPLYHAGRLSRELGGAQIYLKREDLNHTGAHKINNAVGQALLARRMGKKRVIAETGAGQHGVATATVATRYGMECLVYMGEEDIQRQSSNVFRMRLLGAQVTAVSSGTRTLKDALNEALRDWVTNVESTFYVIGTVAGPHPYPVMVRDFHRVIGDEARAQCLELTGRLPDCLIACVGGGSNAIGLFYPFIEDRAVRMIGVEAGGLGLGTGQHAAPLTTGRPGVLHGNRTYLMEDEDGQILPTHSISAGLDYPGVGPEHAYLKDTGRAEYVAATDEEALAAFHRLCRTEGIIPALESAHALAHAFRLAPTMRSDQTIIVNLSGRGDKDIHTVAALEGIHL.

N6-(pyridoxal phosphate)lysine is present on Lys92.

It belongs to the TrpB family. Tetramer of two alpha and two beta chains. Pyridoxal 5'-phosphate is required as a cofactor.

It catalyses the reaction (1S,2R)-1-C-(indol-3-yl)glycerol 3-phosphate + L-serine = D-glyceraldehyde 3-phosphate + L-tryptophan + H2O. The protein operates within amino-acid biosynthesis; L-tryptophan biosynthesis; L-tryptophan from chorismate: step 5/5. Its function is as follows. The beta subunit is responsible for the synthesis of L-tryptophan from indole and L-serine. This is Tryptophan synthase beta chain from Acidithiobacillus ferrooxidans (strain ATCC 23270 / DSM 14882 / CIP 104768 / NCIMB 8455) (Ferrobacillus ferrooxidans (strain ATCC 23270)).